We begin with the raw amino-acid sequence, 328 residues long: Phenylalanine--tRNA ligase alpha subunit (328 aa).

Glu-245 is a binding site for Mg(2+).

The protein belongs to the class-II aminoacyl-tRNA synthetase family. Phe-tRNA synthetase alpha subunit type 1 subfamily. In terms of assembly, tetramer of two alpha and two beta subunits. Mg(2+) serves as cofactor.

It is found in the cytoplasm. It carries out the reaction tRNA(Phe) + L-phenylalanine + ATP = L-phenylalanyl-tRNA(Phe) + AMP + diphosphate + H(+). The sequence is that of Phenylalanine--tRNA ligase alpha subunit from Helicobacter pylori (strain HPAG1).